The following is a 357-amino-acid chain: Sorbitol dehydrogenase (357 aa).

Position 2 is an N-acetylalanine (A2). C45 contributes to the Zn(2+) binding site. A substrate-binding site is contributed by Y51. H70 and E71 together coordinate Zn(2+). E156 serves as a coordination point for substrate. The NAD(+) site is built by I184, D204, and R209. Phosphoserine occurs at positions 211 and 225. NAD(+) contacts are provided by residues 273–275 (VGL) and 297–299 (VFR). Residues R299 and Y300 each contribute to the substrate site.

It belongs to the zinc-containing alcohol dehydrogenase family. As to quaternary structure, homotetramer. Requires Zn(2+) as cofactor. In terms of tissue distribution, expressed in liver. Expressed in kidney and epithelial cells of both benign and malignant prostate tissue. Expressed in epididymis (at protein level).

Its subcellular location is the mitochondrion membrane. It localises to the cell projection. The protein localises to the cilium. The protein resides in the flagellum. The catalysed reaction is keto-D-fructose + NADH + H(+) = D-sorbitol + NAD(+). It catalyses the reaction L-threitol + NAD(+) = L-erythrulose + NADH + H(+). It carries out the reaction xylitol + NAD(+) = D-xylulose + NADH + H(+). The enzyme catalyses ribitol + NAD(+) = D-ribulose + NADH + H(+). The catalysed reaction is (R,R)-butane-2,3-diol + NAD(+) = (R)-acetoin + NADH + H(+). It catalyses the reaction L-iditol + NAD(+) = keto-L-sorbose + NADH + H(+). With respect to regulation, inhibited by CP-166,572, an inhibitor that is competitive with fructose. Also competitively inhibited by phenanthroline and 4-methylpyrazole in vitro. In terms of biological role, polyol dehydrogenase that catalyzes the reversible NAD(+)-dependent oxidation of various sugar alcohols. Is mostly active with D-sorbitol (D-glucitol), L-threitol, xylitol and ribitol as substrates, leading to the C2-oxidized products D-fructose, L-erythrulose, D-xylulose, and D-ribulose, respectively. Is a key enzyme in the polyol pathway that interconverts glucose and fructose via sorbitol, which constitutes an important alternate route for glucose metabolism. The polyol pathway is believed to be involved in the etiology of diabetic complications, such as diabetic neuropathy and retinopathy, induced by hyperglycemia. May play a role in sperm motility by using sorbitol as an alternative energy source for sperm motility. May have a more general function in the metabolism of secondary alcohols since it also catalyzes the stereospecific oxidation of (2R,3R)-2,3-butanediol. To a lesser extent, can also oxidize L-arabinitol, galactitol and D-mannitol and glycerol in vitro. Oxidizes neither ethanol nor other primary alcohols. Cannot use NADP(+) as the electron acceptor. The polypeptide is Sorbitol dehydrogenase (SORD) (Homo sapiens (Human)).